A 397-amino-acid polypeptide reads, in one-letter code: uncharacterized protein (397 aa).

4 helical membrane-spanning segments follow: residues 142–162 (WETIGTFTVSGLLVAVSVGIA), 191–211 (SQLLFEHPFMALGLIFGSVVL), 242–258 (ALTGMVSLLALSGTYFL), and 260–280 (APWLDPFFGCLVSIVVFSAGF).

This sequence belongs to the cation diffusion facilitator (CDF) transporter (TC 2.A.4) family. SLC30A subfamily.

It localises to the membrane. This is an uncharacterized protein from Schizosaccharomyces pombe (strain 972 / ATCC 24843) (Fission yeast).